A 262-amino-acid polypeptide reads, in one-letter code: Flap endonuclease Xni (262 aa).

Residue aspartate 105 coordinates Mg(2+). Positions glutamate 162–isoleucine 259 constitute a 5'-3' exonuclease domain. Leucine 172, alanine 173, proline 181, isoleucine 183, and isoleucine 186 together coordinate K(+). Residues glycine 185–serine 190 are interaction with DNA.

This sequence belongs to the Xni family. Mg(2+) is required as a cofactor. Requires K(+) as cofactor.

Has flap endonuclease activity. During DNA replication, flap endonucleases cleave the 5'-overhanging flap structure that is generated by displacement synthesis when DNA polymerase encounters the 5'-end of a downstream Okazaki fragment. In Shewanella baltica (strain OS185), this protein is Flap endonuclease Xni.